The sequence spans 426 residues: Serine--tRNA ligase (426 aa).

L-serine is bound at residue 233–235 (TAE). Residue 264 to 266 (RSE) coordinates ATP. E287 provides a ligand contact to L-serine. Residue 351-354 (EISS) coordinates ATP. An L-serine-binding site is contributed by S387.

This sequence belongs to the class-II aminoacyl-tRNA synthetase family. Type-1 seryl-tRNA synthetase subfamily. In terms of assembly, homodimer. The tRNA molecule binds across the dimer.

It localises to the cytoplasm. It catalyses the reaction tRNA(Ser) + L-serine + ATP = L-seryl-tRNA(Ser) + AMP + diphosphate + H(+). The enzyme catalyses tRNA(Sec) + L-serine + ATP = L-seryl-tRNA(Sec) + AMP + diphosphate + H(+). Its pathway is aminoacyl-tRNA biosynthesis; selenocysteinyl-tRNA(Sec) biosynthesis; L-seryl-tRNA(Sec) from L-serine and tRNA(Sec): step 1/1. In terms of biological role, catalyzes the attachment of serine to tRNA(Ser). Is also able to aminoacylate tRNA(Sec) with serine, to form the misacylated tRNA L-seryl-tRNA(Sec), which will be further converted into selenocysteinyl-tRNA(Sec). This is Serine--tRNA ligase from Clostridium botulinum (strain Langeland / NCTC 10281 / Type F).